Reading from the N-terminus, the 499-residue chain is UDP-N-acetylmuramoyl-L-alanyl-D-glutamate--2,6-diaminopimelate ligase (499 aa).

Ser32 is a UDP-N-acetyl-alpha-D-muramoyl-L-alanyl-D-glutamate binding site. 117 to 123 is a binding site for ATP; that stretch reads GTNGKTT. Residues 159–160, Ser186, Gln192, and Arg194 each bind UDP-N-acetyl-alpha-D-muramoyl-L-alanyl-D-glutamate; that span reads TT. N6-carboxylysine is present on Lys226. Meso-2,6-diaminopimelate-binding positions include Arg394, 418 to 421, Gly469, and Glu473; that span reads DNPR. Residues 418–421 carry the Meso-diaminopimelate recognition motif motif; it reads DNPR.

Belongs to the MurCDEF family. MurE subfamily. Requires Mg(2+) as cofactor. Post-translationally, carboxylation is probably crucial for Mg(2+) binding and, consequently, for the gamma-phosphate positioning of ATP.

Its subcellular location is the cytoplasm. It carries out the reaction UDP-N-acetyl-alpha-D-muramoyl-L-alanyl-D-glutamate + meso-2,6-diaminopimelate + ATP = UDP-N-acetyl-alpha-D-muramoyl-L-alanyl-gamma-D-glutamyl-meso-2,6-diaminopimelate + ADP + phosphate + H(+). The protein operates within cell wall biogenesis; peptidoglycan biosynthesis. Its function is as follows. Catalyzes the addition of meso-diaminopimelic acid to the nucleotide precursor UDP-N-acetylmuramoyl-L-alanyl-D-glutamate (UMAG) in the biosynthesis of bacterial cell-wall peptidoglycan. The chain is UDP-N-acetylmuramoyl-L-alanyl-D-glutamate--2,6-diaminopimelate ligase from Synechococcus sp. (strain WH7803).